The chain runs to 270 residues: 4-hydroxy-tetrahydrodipicolinate reductase (270 aa).

Residues 11 to 16 and E37 each bind NAD(+); that span reads GASGRM. Residue R38 coordinates NADP(+). NAD(+)-binding positions include 101 to 103 and 125 to 128; these read GTT and APNM. The active-site Proton donor/acceptor is H158. A (S)-2,3,4,5-tetrahydrodipicolinate-binding site is contributed by H159. Residue K162 is the Proton donor of the active site. 168–169 is a binding site for (S)-2,3,4,5-tetrahydrodipicolinate; sequence GT.

Belongs to the DapB family.

Its subcellular location is the cytoplasm. It catalyses the reaction (S)-2,3,4,5-tetrahydrodipicolinate + NAD(+) + H2O = (2S,4S)-4-hydroxy-2,3,4,5-tetrahydrodipicolinate + NADH + H(+). The catalysed reaction is (S)-2,3,4,5-tetrahydrodipicolinate + NADP(+) + H2O = (2S,4S)-4-hydroxy-2,3,4,5-tetrahydrodipicolinate + NADPH + H(+). It functions in the pathway amino-acid biosynthesis; L-lysine biosynthesis via DAP pathway; (S)-tetrahydrodipicolinate from L-aspartate: step 4/4. Catalyzes the conversion of 4-hydroxy-tetrahydrodipicolinate (HTPA) to tetrahydrodipicolinate. The sequence is that of 4-hydroxy-tetrahydrodipicolinate reductase from Shewanella amazonensis (strain ATCC BAA-1098 / SB2B).